The sequence spans 232 residues: Large ribosomal subunit protein uL1 (232 aa).

Belongs to the universal ribosomal protein uL1 family. Part of the 50S ribosomal subunit.

Its function is as follows. Binds directly to 23S rRNA. The L1 stalk is quite mobile in the ribosome, and is involved in E site tRNA release. Functionally, protein L1 is also a translational repressor protein, it controls the translation of the L11 operon by binding to its mRNA. This Thermosipho africanus (strain TCF52B) protein is Large ribosomal subunit protein uL1.